The following is a 160-amino-acid chain: Transcription antitermination protein NusB (160 aa).

This sequence belongs to the NusB family.

Functionally, involved in transcription antitermination. Required for transcription of ribosomal RNA (rRNA) genes. Binds specifically to the boxA antiterminator sequence of the ribosomal RNA (rrn) operons. The sequence is that of Transcription antitermination protein NusB from Mycolicibacterium smegmatis (strain ATCC 700084 / mc(2)155) (Mycobacterium smegmatis).